A 377-amino-acid polypeptide reads, in one-letter code: MDLSDLVQLYSDGIPQPTITPPTQNKDELNKNNNNKNKIIRHKGGNKNNRNNKNNVDNNNNNNNNNNNNEKQNQTNVNNEKITNTETLEIKKNNNNNNNNNNNNNNNNNNNNNNKNKYNKFNDNNNKKNKRNNDDDDDKEEMKRIKLFNQRLKEIKIQESPEDIARYLEERRRRYPSKANIEAKKKEEEDARKRGELLYNNNNNSKKKQTPDKKKKLENQTSKNNNKSSTTKTELTNTTTNTSSTTNPTTDTTTTTTNVVSIQKENENQEKENNDNDNDNEPIEVPSTLEFNKFEEKPIKEVKVNTASSNKRNKKRNNPKKVKEEPQVNKFQDSLFTKLFERDISAENNIILQCFRHFANKINQINGNDKLDEKKEI.

5 disordered regions span residues 10–79 (YSDG…NVNN), 91–141 (KKNN…DKEE), 182–257 (EAKK…TTTT), 265–284 (ENENQEKENNDNDNDNEPIE), and 289–326 (LEFNKFEEKPIKEVKVNTASSNKRNKKRNNPKKVKEEP). Composition is skewed to low complexity over residues 14-24 (IPQPTITPPTQ), 46-79 (NKNNRNNKNNVDNNNNNNNNNNNNEKQNQTNVNN), and 93-124 (NNNNNNNNNNNNNNNNNNNNNNKNKYNKFNDN). Composition is skewed to basic and acidic residues over residues 182-196 (EAKKKEEEDARKRGE) and 209-218 (QTPDKKKKLE). Low complexity predominate over residues 221-257 (TSKNNNKSSTTKTELTNTTTNTSSTTNPTTDTTTTTT). Basic and acidic residues-rich tracts occupy residues 265–274 (ENENQEKENN) and 292–303 (NKFEEKPIKEVK). The segment covering 311–320 (KRNKKRNNPK) has biased composition (basic residues).

This is an uncharacterized protein from Dictyostelium discoideum (Social amoeba).